The sequence spans 224 residues: UPF0758 protein CBUD_1789 (224 aa).

The MPN domain maps to glutamine 102–leucine 224. Histidine 173, histidine 175, and aspartate 186 together coordinate Zn(2+). The JAMM motif motif lies at histidine 173 to aspartate 186.

Belongs to the UPF0758 family.

In Coxiella burnetii (strain Dugway 5J108-111), this protein is UPF0758 protein CBUD_1789.